A 692-amino-acid chain; its full sequence is Protein arginine N-methyltransferase 7 (692 aa).

2 consecutive SAM-dependent MTase PRMT-type domains span residues 14 to 345 (SLEW…YCVW) and 358 to 684 (SAYQ…ITME). Arg32 is subject to Omega-N-methylarginine. Residues Glu144 and Glu153 contribute to the active site.

This sequence belongs to the class I-like SAM-binding methyltransferase superfamily. Protein arginine N-methyltransferase family. PRMT7 subfamily. Homodimer and heterodimer. Interacts with PRMT5 and SNRPD3. Interacts with CTCFL.

It localises to the cytoplasm. Its subcellular location is the cytosol. The protein localises to the nucleus. It carries out the reaction L-arginyl-[protein] + S-adenosyl-L-methionine = N(omega)-methyl-L-arginyl-[protein] + S-adenosyl-L-homocysteine + H(+). Arginine methyltransferase that can both catalyze the formation of omega-N monomethylarginine (MMA) and symmetrical dimethylarginine (sDMA), with a preference for the formation of MMA. Specifically mediates the symmetrical dimethylation of arginine residues in the small nuclear ribonucleoproteins Sm D1 (SNRPD1) and Sm D3 (SNRPD3); such methylation being required for the assembly and biogenesis of snRNP core particles. Specifically mediates the symmetric dimethylation of histone H4 'Arg-3' to form H4R3me2s. Plays a role in gene imprinting by being recruited by CTCFL at the H19 imprinted control region (ICR) and methylating histone H4 to form H4R3me2s, possibly leading to recruit DNA methyltransferases at these sites. May also play a role in embryonic stem cell (ESC) pluripotency. Also able to mediate the arginine methylation of histone H2A and myelin basic protein (MBP) in vitro; the relevance of such results is however unclear in vivo. The polypeptide is Protein arginine N-methyltransferase 7 (Prmt7) (Mus musculus (Mouse)).